The primary structure comprises 255 residues: Propionicin-F (255 aa).

2 propeptides span residues 1-101 and 145-255; these read MNTK…RVSC and GTPT…DETV.

The protein localises to the secreted. Functionally, bacteriocin with specific antibacterial activity against strains of P.freudenreichii. No antibacterial activity was detected against P.acidipropionici, P.jensenii and P.thoenii. In Propionibacterium freudenreichii subsp. freudenreichii, this protein is Propionicin-F.